Here is a 236-residue protein sequence, read N- to C-terminus: Phosphoribosylaminoimidazole-succinocarboxamide synthase (236 aa).

Belongs to the SAICAR synthetase family.

The enzyme catalyses 5-amino-1-(5-phospho-D-ribosyl)imidazole-4-carboxylate + L-aspartate + ATP = (2S)-2-[5-amino-1-(5-phospho-beta-D-ribosyl)imidazole-4-carboxamido]succinate + ADP + phosphate + 2 H(+). It participates in purine metabolism; IMP biosynthesis via de novo pathway; 5-amino-1-(5-phospho-D-ribosyl)imidazole-4-carboxamide from 5-amino-1-(5-phospho-D-ribosyl)imidazole-4-carboxylate: step 1/2. The polypeptide is Phosphoribosylaminoimidazole-succinocarboxamide synthase (Campylobacter jejuni (strain RM1221)).